Reading from the N-terminus, the 283-residue chain is Phosphatidylglycerol--prolipoprotein diacylglyceryl transferase (283 aa).

4 helical membrane-spanning segments follow: residues 17-37 (LAVR…TFLG), 56-76 (FLTW…VLFY), 92-112 (WEGG…IWLF), and 117-137 (GIGF…GLAS). R139 lines the a 1,2-diacyl-sn-glycero-3-phospho-(1'-sn-glycerol) pocket. A run of 3 helical transmembrane segments spans residues 194 to 214 (PSQL…VWLF), 222 to 242 (GQVA…AEFA), and 255 to 275 (GLSM…VGFV).

This sequence belongs to the Lgt family.

It is found in the cell inner membrane. The catalysed reaction is L-cysteinyl-[prolipoprotein] + a 1,2-diacyl-sn-glycero-3-phospho-(1'-sn-glycerol) = an S-1,2-diacyl-sn-glyceryl-L-cysteinyl-[prolipoprotein] + sn-glycerol 1-phosphate + H(+). The protein operates within protein modification; lipoprotein biosynthesis (diacylglyceryl transfer). Functionally, catalyzes the transfer of the diacylglyceryl group from phosphatidylglycerol to the sulfhydryl group of the N-terminal cysteine of a prolipoprotein, the first step in the formation of mature lipoproteins. This chain is Phosphatidylglycerol--prolipoprotein diacylglyceryl transferase, found in Neisseria meningitidis serogroup A / serotype 4A (strain DSM 15465 / Z2491).